Reading from the N-terminus, the 235-residue chain is Hydroxyacylglutathione hydrolase (235 aa).

Zn(2+) contacts are provided by His53, His55, Asp57, His58, His109, Asp127, and His165.

It belongs to the metallo-beta-lactamase superfamily. Glyoxalase II family. Monomer. It depends on Zn(2+) as a cofactor.

It catalyses the reaction an S-(2-hydroxyacyl)glutathione + H2O = a 2-hydroxy carboxylate + glutathione + H(+). It participates in secondary metabolite metabolism; methylglyoxal degradation; (R)-lactate from methylglyoxal: step 2/2. Functionally, thiolesterase that catalyzes the hydrolysis of S-D-lactoyl-glutathione to form glutathione and D-lactic acid. This is Hydroxyacylglutathione hydrolase from Glaesserella parasuis serovar 5 (strain SH0165) (Haemophilus parasuis).